Reading from the N-terminus, the 281-residue chain is Large ribosomal subunit protein uL2 (281 aa).

The tract at residues Val223–Lys281 is disordered. The segment covering Lys261–Lys281 has biased composition (basic residues).

Belongs to the universal ribosomal protein uL2 family. In terms of assembly, part of the 50S ribosomal subunit. Forms a bridge to the 30S subunit in the 70S ribosome.

In terms of biological role, one of the primary rRNA binding proteins. Required for association of the 30S and 50S subunits to form the 70S ribosome, for tRNA binding and peptide bond formation. It has been suggested to have peptidyltransferase activity; this is somewhat controversial. Makes several contacts with the 16S rRNA in the 70S ribosome. The sequence is that of Large ribosomal subunit protein uL2 from Mycoplasmopsis synoviae (strain 53) (Mycoplasma synoviae).